Reading from the N-terminus, the 111-residue chain is uncharacterized protein (111 aa).

A disordered region spans residues 12–34; that stretch reads AWCPSRPPASAPSAPQEAARRGD. A required for interaction with PPP3CA region spans residues 71 to 76; the sequence is PNIIIT. A phosphothreonine mark is found at Thr79 and Thr81.

In terms of assembly, interacts (via PxIxIT motif, when phosphorylated on Thr-79) with PPP3CA.

This is an uncharacterized protein from Mus musculus (Mouse).